A 31-amino-acid polypeptide reads, in one-letter code: Photosystem II reaction center protein T (31 aa).

A helical transmembrane segment spans residues 3 to 23 (SVAYILVLTMALSVIFFAIAF).

The protein belongs to the PsbT family. PSII is composed of 1 copy each of membrane proteins PsbA, PsbB, PsbC, PsbD, PsbE, PsbF, PsbH, PsbI, PsbJ, PsbK, PsbL, PsbM, PsbT, PsbX, PsbY, PsbZ, Psb30/Ycf12, peripheral proteins PsbO, CyanoQ (PsbQ), PsbU, PsbV and a large number of cofactors. It forms dimeric complexes.

It localises to the cellular thylakoid membrane. Functionally, found at the monomer-monomer interface of the photosystem II (PS II) dimer, plays a role in assembly and dimerization of PSII. PSII is a light-driven water plastoquinone oxidoreductase, using light energy to abstract electrons from H(2)O, generating a proton gradient subsequently used for ATP formation. The polypeptide is Photosystem II reaction center protein T (Microcystis aeruginosa (strain NIES-843 / IAM M-2473)).